Here is a 324-residue protein sequence, read N- to C-terminus: NADH-quinone oxidoreductase subunit H (324 aa).

A run of 8 helical transmembrane segments spans residues 11 to 31 (ILIT…CGAF), 81 to 101 (VIFT…FAIV), 114 to 134 (IGIL…LFAG), 154 to 174 (VSYE…AGSF), 186 to 206 (LWNV…GVAV), 237 to 257 (FFVG…TLFF), 265 to 285 (LPPF…FILI), and 304 to 324 (VCLP…LYNA).

The protein belongs to the complex I subunit 1 family. NDH-1 is composed of 13 different subunits. Subunits NuoA, H, J, K, L, M, N constitute the membrane sector of the complex.

It localises to the cell inner membrane. The catalysed reaction is a quinone + NADH + 5 H(+)(in) = a quinol + NAD(+) + 4 H(+)(out). NDH-1 shuttles electrons from NADH, via FMN and iron-sulfur (Fe-S) centers, to quinones in the respiratory chain. The immediate electron acceptor for the enzyme in this species is believed to be ubiquinone. Couples the redox reaction to proton translocation (for every two electrons transferred, four hydrogen ions are translocated across the cytoplasmic membrane), and thus conserves the redox energy in a proton gradient. This subunit may bind ubiquinone. The chain is NADH-quinone oxidoreductase subunit H from Pectobacterium atrosepticum (strain SCRI 1043 / ATCC BAA-672) (Erwinia carotovora subsp. atroseptica).